A 358-amino-acid polypeptide reads, in one-letter code: Transcription factor bHLH67 (358 aa).

The segment at 125 to 176 (NMTLPSSTSSPLSAHSRRKRKINHLLPQEMTREKRKRRKTKPSKNNEEIENQ) is disordered. The span at 127–137 (TLPSSTSSPLS) shows a compositional bias: low complexity. The span at 157–166 (EKRKRRKTKP) shows a compositional bias: basic residues. One can recognise a bHLH domain in the interval 175–226 (NQRINHIAVERNRRRQMNEHINSLRALLPPSYIQRGDQASIVGGAINYVKVL).

In terms of assembly, homodimer. In terms of tissue distribution, expressed constitutively in roots, leaves, stems, and flowers.

It is found in the nucleus. The chain is Transcription factor bHLH67 (BHLH67) from Arabidopsis thaliana (Mouse-ear cress).